A 277-amino-acid polypeptide reads, in one-letter code: Putative phosphoenolpyruvate synthase regulatory protein (277 aa).

Gly-156–Thr-163 lines the ADP pocket.

It belongs to the pyruvate, phosphate/water dikinase regulatory protein family. PSRP subfamily.

The catalysed reaction is [pyruvate, water dikinase] + ADP = [pyruvate, water dikinase]-phosphate + AMP + H(+). It catalyses the reaction [pyruvate, water dikinase]-phosphate + phosphate + H(+) = [pyruvate, water dikinase] + diphosphate. In terms of biological role, bifunctional serine/threonine kinase and phosphorylase involved in the regulation of the phosphoenolpyruvate synthase (PEPS) by catalyzing its phosphorylation/dephosphorylation. The protein is Putative phosphoenolpyruvate synthase regulatory protein of Deinococcus radiodurans (strain ATCC 13939 / DSM 20539 / JCM 16871 / CCUG 27074 / LMG 4051 / NBRC 15346 / NCIMB 9279 / VKM B-1422 / R1).